A 163-amino-acid chain; its full sequence is ATP synthase subunit b, sodium ion specific (163 aa).

The helical transmembrane segment at valine 9–phenylalanine 29 threads the bilayer.

Belongs to the ATPase B chain family. F-type ATPases have 2 components, F(1) - the catalytic core - and F(0) - the membrane proton channel. F(1) has five subunits: alpha(3), beta(3), gamma(1), delta(1), epsilon(1). F(0) has three main subunits: a(1), b(2) and c(10-14). The alpha and beta chains form an alternating ring which encloses part of the gamma chain. F(1) is attached to F(0) by a central stalk formed by the gamma and epsilon chains, while a peripheral stalk is formed by the delta and b chains.

Its subcellular location is the cell inner membrane. Functionally, f(1)F(0) ATP synthase produces ATP from ADP in the presence of a proton or sodium gradient. F-type ATPases consist of two structural domains, F(1) containing the extramembraneous catalytic core and F(0) containing the membrane proton channel, linked together by a central stalk and a peripheral stalk. During catalysis, ATP synthesis in the catalytic domain of F(1) is coupled via a rotary mechanism of the central stalk subunits to proton translocation. Its function is as follows. Component of the F(0) channel, it forms part of the peripheral stalk, linking F(1) to F(0). The protein is ATP synthase subunit b, sodium ion specific (atpF) of Ilyobacter tartaricus.